The chain runs to 266 residues: Undecaprenyl-diphosphatase (266 aa).

8 helical membrane passes run 3 to 23 (MSLL…FLPV), 41 to 61 (GTET…VVLY), 86 to 106 (VLVG…AIKA), 108 to 128 (LNTP…ILVI), 149 to 171 (FGVG…ATIM), 184 to 204 (AEYS…LALW), 220 to 240 (IGFV…LGVV), and 245 to 265 (FAPF…WLLA).

The protein belongs to the UppP family.

It is found in the cell inner membrane. The catalysed reaction is di-trans,octa-cis-undecaprenyl diphosphate + H2O = di-trans,octa-cis-undecaprenyl phosphate + phosphate + H(+). Its function is as follows. Catalyzes the dephosphorylation of undecaprenyl diphosphate (UPP). Confers resistance to bacitracin. In Rhizorhabdus wittichii (strain DSM 6014 / CCUG 31198 / JCM 15750 / NBRC 105917 / EY 4224 / RW1) (Sphingomonas wittichii), this protein is Undecaprenyl-diphosphatase.